The following is an 84-amino-acid chain: Putative membrane protein insertion efficiency factor (84 aa).

Belongs to the UPF0161 family.

Its subcellular location is the cell inner membrane. Its function is as follows. Could be involved in insertion of integral membrane proteins into the membrane. The sequence is that of Putative membrane protein insertion efficiency factor from Nostoc sp. (strain PCC 7120 / SAG 25.82 / UTEX 2576).